A 127-amino-acid chain; its full sequence is Urotensin-2 (127 aa).

Positions 1 to 16 (MSKLFFCCLILAGSFC) are cleaved as a signal peptide. Residues 17-111 (SFRSLPIIVP…RLQSKDRKQF (95 aa)) constitute a propeptide that is removed on maturation. A disulfide bond links Cys121 and Cys126.

This sequence belongs to the urotensin-2 family. As to expression, central nervous system. Spinal cord.

The protein resides in the secreted. Its function is as follows. Involved in smooth muscle stimulating and ion mobilizing activities. It has a suggested role as a corticotropin-releasing factor. The protein is Urotensin-2 (UTS2) of Pelophylax ridibundus (Marsh frog).